We begin with the raw amino-acid sequence, 297 residues long: 2-phospho-L-lactate transferase (297 aa).

Residue Asp-49 participates in 7,8-didemethyl-8-hydroxy-5-deazariboflavin binding.

Belongs to the CofD family. In terms of assembly, homodimer. Mg(2+) is required as a cofactor.

It catalyses the reaction (2S)-lactyl-2-diphospho-5'-guanosine + 7,8-didemethyl-8-hydroxy-5-deazariboflavin = oxidized coenzyme F420-0 + GMP + H(+). It participates in cofactor biosynthesis; coenzyme F420 biosynthesis. Catalyzes the transfer of the 2-phospholactate moiety from (2S)-lactyl-2-diphospho-5'-guanosine to 7,8-didemethyl-8-hydroxy-5-deazariboflavin (FO) with the formation of oxidized coenzyme F420-0 and GMP. The chain is 2-phospho-L-lactate transferase from Methanospirillum hungatei JF-1 (strain ATCC 27890 / DSM 864 / NBRC 100397 / JF-1).